A 162-amino-acid polypeptide reads, in one-letter code: MFFENSAILLCALLSIAVGYTKSPFMSLMYSVMLFINSSFVLMMLGFEFLALVNLLVYVGALAVLFLFVIMLLEIPATELRAYSRGWSTLGIFVFIINGVFQITPSMGPRGIITGLPGAESITNLGHALYLYFADLLILNSLVLTVALFGRFAIAPVRTTGR.

5 consecutive transmembrane segments (helical) span residues 1-21, 32-52, 55-75, 87-107, and 129-149; these read MFFE…VGYT, VMLF…FLAL, LLVY…LLEI, WSTL…TPSM, and LYLY…VALF.

This sequence belongs to the complex I subunit 6 family.

The protein localises to the mitochondrion membrane. It carries out the reaction a ubiquinone + NADH + 5 H(+)(in) = a ubiquinol + NAD(+) + 4 H(+)(out). Its function is as follows. Core subunit of the mitochondrial membrane respiratory chain NADH dehydrogenase (Complex I) that is believed to belong to the minimal assembly required for catalysis. Complex I functions in the transfer of electrons from NADH to the respiratory chain. The immediate electron acceptor for the enzyme is believed to be ubiquinone. The protein is NADH-ubiquinone oxidoreductase chain 6 (ND6) of Chlamydomonas reinhardtii (Chlamydomonas smithii).